A 159-amino-acid polypeptide reads, in one-letter code: Ribosomal RNA large subunit methyltransferase H (159 aa).

S-adenosyl-L-methionine contacts are provided by residues leucine 76, glycine 108, and 127 to 132 (FGLLTL).

Belongs to the RNA methyltransferase RlmH family. As to quaternary structure, homodimer.

It is found in the cytoplasm. The enzyme catalyses pseudouridine(1915) in 23S rRNA + S-adenosyl-L-methionine = N(3)-methylpseudouridine(1915) in 23S rRNA + S-adenosyl-L-homocysteine + H(+). In terms of biological role, specifically methylates the pseudouridine at position 1915 (m3Psi1915) in 23S rRNA. This Streptococcus agalactiae serotype Ia (strain ATCC 27591 / A909 / CDC SS700) protein is Ribosomal RNA large subunit methyltransferase H.